Here is a 1483-residue protein sequence, read N- to C-terminus: Heme-responsive zinc finger transcription factor HAP1 (1483 aa).

Polar residues predominate over residues 1–50 (MSNTPYNSSVPSIASMTQSSVSRSPNMHTATTPGANTSSNSPPLHMSSDS). The interval 1–56 (MSNTPYNSSVPSIASMTQSSVSRSPNMHTATTPGANTSSNSPPLHMSSDSSKIKRK) is disordered. Zn(2+)-binding residues include C64, C67, C74, C81, C84, and C93. A DNA-binding region (zn(2)-C6 fungal-type) is located at residues 64-93 (CTICRKRKVKCDKLRPHCQQCTKTGVAHLC). Positions 105 to 134 (EKELLKDNELKKLRERVKSLEKTLSKVHSS) form a coiled coil. Residues 126-208 (KTLSKVHSSP…ANSSSLSISN (83 aa)) are disordered. Low complexity predominate over residues 130–142 (KVHSSPSSNSLKS). 2 stretches are compositionally biased toward polar residues: residues 143 to 152 (YNTPESSNLF) and 160 to 176 (TLVN…SHMH). Over residues 177–208 (QQQQQQQQQEQQQDFSRSANANANSSSLSISN) the composition is skewed to low complexity. Residues 244-444 (KGDPYLKLLW…NTIPHHQPQS (201 aa)) are heme-responsive; required for HMC formation. HRM repeat units follow at residues 280-285 (KCPINH), 299-304 (KCPVDH), 323-328 (KCPVDH), 347-352 (RCPVDH), 389-394 (KCPVDH), and 415-420 (RCPIDH). Composition is skewed to polar residues over residues 432 to 447 (STHN…SGSH) and 706 to 734 (QLNA…NPTL). Disordered stretches follow at residues 432-458 (STHN…NRKH) and 706-767 (QLNA…KENQ). Residues 735 to 759 (NNNMSAATTNSSSRSGSADSRSGSN) are compositionally biased toward low complexity. One copy of the HRM 7 repeat lies at 1192 to 1197 (KCPVYQ).

Binds DNA as a homodimer. Interacts with SRO9 and YDJ1. In the absence of heme, binds to at least four cellular proteins, including YDJ1 and SRO9, forming a high-molecular-weight complex (HMC) which results in repression of its activity and dictates its DNA-binding specificity.

The protein resides in the nucleus. In terms of biological role, regulation of oxygen dependent gene expression. It modulates the expression of Iso-1 (CYP1) and Iso-2 (CYP3) cytochrome c. In response to heme, promotes transcription of genes encoding functions required for respiration, controlling oxidative damage and repression of anaerobic genes. Binds to the sequence 5'-CGGNNNTNNCGG-3'. This Saccharomyces cerevisiae (strain Lalvin EC1118 / Prise de mousse) (Baker's yeast) protein is Heme-responsive zinc finger transcription factor HAP1 (HAP1).